A 203-amino-acid chain; its full sequence is dITP/XTP pyrophosphatase (203 aa).

Residue Ser-7–Lys-12 coordinates substrate. 2 residues coordinate Mg(2+): Glu-47 and Asp-77. Catalysis depends on Asp-77, which acts as the Proton acceptor. Substrate-binding positions include Ser-78, Phe-160–Asp-163, Lys-183, and His-188–Arg-189.

Belongs to the HAM1 NTPase family. Homodimer. It depends on Mg(2+) as a cofactor.

The catalysed reaction is XTP + H2O = XMP + diphosphate + H(+). It carries out the reaction dITP + H2O = dIMP + diphosphate + H(+). It catalyses the reaction ITP + H2O = IMP + diphosphate + H(+). Its function is as follows. Pyrophosphatase that catalyzes the hydrolysis of nucleoside triphosphates to their monophosphate derivatives, with a high preference for the non-canonical purine nucleotides XTP (xanthosine triphosphate), dITP (deoxyinosine triphosphate) and ITP. Seems to function as a house-cleaning enzyme that removes non-canonical purine nucleotides from the nucleotide pool, thus preventing their incorporation into DNA/RNA and avoiding chromosomal lesions. The polypeptide is dITP/XTP pyrophosphatase (Opitutus terrae (strain DSM 11246 / JCM 15787 / PB90-1)).